Consider the following 421-residue polypeptide: Testin (421 aa).

The PET domain occupies 92-199 (MILTNPVAAK…GDVKLPCEMD (108 aa)). Residues 133-164 (EKQPVAGSEGAQYRKKQLAKQLPAHDQDPSKC) form a disordered region. Residues 155-164 (PAHDQDPSKC) show a composition bias toward basic and acidic residues. LIM zinc-binding domains follow at residues 234-297 (YSCY…CDSE), 299-359 (PRCA…NHAV), and 362-421 (QGCH…KMMS).

The protein belongs to the prickle / espinas / testin family. In terms of assembly, interacts via LIM domain 1 with ZYX. Interacts (via LIM domain 3) with ENAH and VASP. Interacts with ALKBH4, talin, actin, alpha-actinin, GRIP1 and PXN. Interacts (via LIM domain 2) with ACTL7A (via N-terminus). Heterodimer with ACTL7A; the heterodimer interacts with ENAH to form a heterotrimer.

The protein localises to the cytoplasm. It localises to the cell junction. The protein resides in the focal adhesion. In terms of biological role, scaffold protein that may play a role in cell adhesion, cell spreading and in the reorganization of the actin cytoskeleton. Plays a role in the regulation of cell proliferation. May act as a tumor suppressor. This Ateles geoffroyi (Black-handed spider monkey) protein is Testin (TES).